We begin with the raw amino-acid sequence, 277 residues long: Phosphonoacetaldehyde hydrolase-like protein (277 aa).

This sequence belongs to the HAD-like hydrolase superfamily. PhnX family.

This is Phosphonoacetaldehyde hydrolase-like protein (phnX2) from Syntrophobacter fumaroxidans (strain DSM 10017 / MPOB).